A 198-amino-acid polypeptide reads, in one-letter code: Holliday junction branch migration complex subunit RuvA (198 aa).

The tract at residues 1–63 (MYDYIKGQLT…EDAHLLFGFH (63 aa)) is domain I. The tract at residues 64–142 (TEDEKDVFLK…EAPQETGHTK (79 aa)) is domain II. A flexible linker region spans residues 143-147 (ARSNK). Positions 148 to 198 (AGNTQLDEAIEALLALGYTATELKKIRAFFEGTSETAEQYIKSALKLLMKG) are domain III.

Belongs to the RuvA family. Homotetramer. Forms an RuvA(8)-RuvB(12)-Holliday junction (HJ) complex. HJ DNA is sandwiched between 2 RuvA tetramers; dsDNA enters through RuvA and exits via RuvB. An RuvB hexamer assembles on each DNA strand where it exits the tetramer. Each RuvB hexamer is contacted by two RuvA subunits (via domain III) on 2 adjacent RuvB subunits; this complex drives branch migration. In the full resolvosome a probable DNA-RuvA(4)-RuvB(12)-RuvC(2) complex forms which resolves the HJ.

It is found in the cytoplasm. Its function is as follows. The RuvA-RuvB-RuvC complex processes Holliday junction (HJ) DNA during genetic recombination and DNA repair, while the RuvA-RuvB complex plays an important role in the rescue of blocked DNA replication forks via replication fork reversal (RFR). RuvA specifically binds to HJ cruciform DNA, conferring on it an open structure. The RuvB hexamer acts as an ATP-dependent pump, pulling dsDNA into and through the RuvAB complex. HJ branch migration allows RuvC to scan DNA until it finds its consensus sequence, where it cleaves and resolves the cruciform DNA. This chain is Holliday junction branch migration complex subunit RuvA, found in Streptococcus pyogenes serotype M49 (strain NZ131).